Consider the following 103-residue polypeptide: Pyrimidine/purine nucleoside phosphorylase (103 aa).

Belongs to the nucleoside phosphorylase PpnP family.

It carries out the reaction a purine D-ribonucleoside + phosphate = a purine nucleobase + alpha-D-ribose 1-phosphate. The enzyme catalyses adenosine + phosphate = alpha-D-ribose 1-phosphate + adenine. It catalyses the reaction cytidine + phosphate = cytosine + alpha-D-ribose 1-phosphate. The catalysed reaction is guanosine + phosphate = alpha-D-ribose 1-phosphate + guanine. It carries out the reaction inosine + phosphate = alpha-D-ribose 1-phosphate + hypoxanthine. The enzyme catalyses thymidine + phosphate = 2-deoxy-alpha-D-ribose 1-phosphate + thymine. It catalyses the reaction uridine + phosphate = alpha-D-ribose 1-phosphate + uracil. The catalysed reaction is xanthosine + phosphate = alpha-D-ribose 1-phosphate + xanthine. Its function is as follows. Catalyzes the phosphorolysis of diverse nucleosides, yielding D-ribose 1-phosphate and the respective free bases. Can use uridine, adenosine, guanosine, cytidine, thymidine, inosine and xanthosine as substrates. Also catalyzes the reverse reactions. The chain is Pyrimidine/purine nucleoside phosphorylase from Sulfurovum sp. (strain NBC37-1).